The primary structure comprises 358 residues: MQTTHSNPSSPSLTLGIETSCDETGIALYHSEKGLIAHTLYSQIKLHAEYGGVVPELASRDHIRKITPLIQETLKKGQVSAKDITGIAYTAGPGLMGALLSGASVARSLAFAWQIPAIAIHHMEGHLLAPMLEETQPEFPFVCLLVSGGHTMIIRVDGIGRYKLLGDTLDDAAGEAFDKTAKMLGLGYPGGPEVSKLALHGQTDRYKFPRPMVDRPGLDMSFSGLKTFTLNTWLKAKESGDDSEQTKADICRAFEVAVADTLSIKCKRALEQEGLNRLVVSGGVSANREIRAKLDALMAKRKGSAFYPRLEFCTDNGAMIAYAGSKRLEAGQFSDLNFACQPRWDLESLEPIDPIEVV.

Fe cation-binding residues include His-122 and His-126. Residues 145-149, Asp-178, Gly-191, and Asn-287 each bind substrate; that span reads LVSGG. Asp-315 serves as a coordination point for Fe cation.

This sequence belongs to the KAE1 / TsaD family. Fe(2+) serves as cofactor.

It is found in the cytoplasm. The catalysed reaction is L-threonylcarbamoyladenylate + adenosine(37) in tRNA = N(6)-L-threonylcarbamoyladenosine(37) in tRNA + AMP + H(+). Functionally, required for the formation of a threonylcarbamoyl group on adenosine at position 37 (t(6)A37) in tRNAs that read codons beginning with adenine. Is involved in the transfer of the threonylcarbamoyl moiety of threonylcarbamoyl-AMP (TC-AMP) to the N6 group of A37, together with TsaE and TsaB. TsaD likely plays a direct catalytic role in this reaction. The polypeptide is tRNA N6-adenosine threonylcarbamoyltransferase (Hydrogenovibrio crunogenus (strain DSM 25203 / XCL-2) (Thiomicrospira crunogena)).